The primary structure comprises 270 residues: tRNA pseudouridine synthase A (270 aa).

Catalysis depends on aspartate 52, which acts as the Nucleophile. Tyrosine 110 provides a ligand contact to substrate. Positions 251 to 270 are disordered; that stretch reads TGAADEPAAPHGVTETRMQL.

This sequence belongs to the tRNA pseudouridine synthase TruA family. In terms of assembly, homodimer.

The catalysed reaction is uridine(38/39/40) in tRNA = pseudouridine(38/39/40) in tRNA. Formation of pseudouridine at positions 38, 39 and 40 in the anticodon stem and loop of transfer RNAs. This chain is tRNA pseudouridine synthase A, found in Roseiflexus sp. (strain RS-1).